Here is a 234-residue protein sequence, read N- to C-terminus: Bromodomain-containing protein DDB_G0271118 (234 aa).

Residues 1–60 (MDLGTIKGELDNNGYSTIKDFTADVRLMFENALTYNADSSPIWKHAKTLLYFHRKHDEHV) enclose the Bromo domain. Over residues 134–194 (NNNSNNNNNN…SSSSSSSSSS (61 aa)) the composition is skewed to low complexity. The segment at 134–209 (NNNSNNNNNN…KKYSDEERRN (76 aa)) is disordered.

The sequence is that of Bromodomain-containing protein DDB_G0271118 from Dictyostelium discoideum (Social amoeba).